Consider the following 339-residue polypeptide: Phenylalanine--tRNA ligase alpha subunit (339 aa).

Glu254 is a Mg(2+) binding site.

It belongs to the class-II aminoacyl-tRNA synthetase family. Phe-tRNA synthetase alpha subunit type 1 subfamily. As to quaternary structure, tetramer of two alpha and two beta subunits. Mg(2+) is required as a cofactor.

The protein localises to the cytoplasm. The enzyme catalyses tRNA(Phe) + L-phenylalanine + ATP = L-phenylalanyl-tRNA(Phe) + AMP + diphosphate + H(+). This is Phenylalanine--tRNA ligase alpha subunit (pheS) from Chlamydia pneumoniae (Chlamydophila pneumoniae).